We begin with the raw amino-acid sequence, 961 residues long: Mitogen-activated protein kinase kinase kinase 13-A (961 aa).

Residues 88-118 (LRDQDEPENTAPQGSSHSGDGGSYSGNEDIR) are disordered. The region spanning 169–410 (ISELQWLGSG…FRQILMHLDI (242 aa)) is the Protein kinase domain. ATP is bound by residues 175–183 (LGSGAQGAV) and lysine 196. Aspartate 280 acts as the Proton acceptor in catalysis. Leucine-zipper stretches follow at residues 434 to 455 (VKKH…DEEL) and 487 to 508 (LSAI…EQAV). The stretch at 458–497 (RRREELRHALDIREHYERKLERANNLYMELSAIMLQLEVR) forms a coiled coil. Disordered regions lie at residues 513–600 (PGTY…SKGS), 615–637 (ALSQ…CSPY), and 799–883 (RRIR…KLDD). Residues 560–578 (SAEGSAASASPISGSPKTS) show a composition bias toward low complexity. A compositionally biased stretch (basic residues) spans 584-596 (NRYRSKPRHRRVN). Acidic residues predominate over residues 810–823 (ESSEEEEGEVDSEV). The acidic stretch occupies residues 811-824 (SSEEEEGEVDSEVE). A compositionally biased stretch (polar residues) spans 837-851 (KCQSYSTFSSENFSV).

The protein belongs to the protein kinase superfamily. Ser/Thr protein kinase family.

It localises to the cytoplasm. The protein localises to the membrane. It catalyses the reaction L-seryl-[protein] + ATP = O-phospho-L-seryl-[protein] + ADP + H(+). The enzyme catalyses L-threonyl-[protein] + ATP = O-phospho-L-threonyl-[protein] + ADP + H(+). May have a role in the JNK signaling pathway. This chain is Mitogen-activated protein kinase kinase kinase 13-A (map3k13-a), found in Xenopus laevis (African clawed frog).